A 1113-amino-acid chain; its full sequence is Cytospin-A (1113 aa).

Residues 1 to 160 form a disordered region; sequence MKKSVRPAAS…KSKSDGQISD (160 aa). Over residues 59 to 103 the composition is skewed to polar residues; it reads ASCNAVSKSKRTTSVGTTASTLDSKPKTASGTTSKRLASSLSKET. Basic and acidic residues predominate over residues 145–154; that stretch reads SEGRMSKSKS. Positions 220–259 form a coiled coil; that stretch reads AADVESTLILLQEQNQAIREELNLLKSENRMLKDRLNALG. The disordered stretch occupies residues 284-374; that stretch reads AGSGQSDGGG…RRGSSGNASE (91 aa). Over residues 338–358 the composition is skewed to low complexity; it reads SSDDALDAPSGASSSSESECA. 2 coiled-coil regions span residues 379–433 and 473–791; these read CLTE…MDSL and MELE…RGRV. Disordered stretches follow at residues 766–785, 832–902, 914–957, and 972–997; these read QEKNEKLSKELEEVKSRKQD, FDSA…PTYP, GSAA…DGAS, and ALASSSPTASVTPTTRSRLREERKDP. Residues 834 to 845 show a composition bias toward low complexity; the sequence is SASQGPPSSGAS. Pro residues predominate over residues 856-867; sequence PRTPLSPSPMKT. The segment covering 925–940 has biased composition (polar residues); sequence QRVSNMDSTKAISVSR. Residues 941–951 show a composition bias toward basic and acidic residues; that stretch reads RSSEEMKRDMA. A compositionally biased stretch (low complexity) spans 972 to 981; that stretch reads ALASSSPTAS. Residues 1007 to 1112 enclose the Calponin-homology (CH) domain; it reads GSKRNALLKW…YVTAIYKYFE (106 aa).

It belongs to the cytospin-A family. In terms of assembly, may interact with both microtubules and actin cytoskeleton.

Its subcellular location is the cytoplasm. The protein resides in the cytoskeleton. It is found in the spindle. It localises to the cell junction. The protein localises to the gap junction. Involved in cytokinesis and spindle organization. May play a role in actin cytoskeleton organization and microtubule stabilization and hence required for proper cell adhesion and migration. The polypeptide is Cytospin-A (specc1l) (Tetraodon nigroviridis (Spotted green pufferfish)).